The primary structure comprises 349 residues: MEGFLQPVADLFGPSWPVVWTLLKIVAIVAPLMGCVAYLTLAERKVIGYMQVRIGPNRVGPFGLLQPIADGVKLLLKEIIFPSSASKGLFIVGPILALAPSLVAWAVVPFDDGLVLANVNAGLLFLLAVTSMEVYGVIVAGWASNSKYPFIGAMRAAAQMVSYEVSMGFALICVLLISSSLNLSEIVNSQGSGRFHDMGLSFLSWNWLPLLPMFVVYLISGIAETNRAPFDVVEGEAEIVAGHMVEYSGMAFALFFLAEYANMILVSILTSVLFLGGWLSPVGFLPDGFHWLALKTASILFIFLWARATFPRFRYDHIMRLGWKVFIPVTLVWVVVVAVWLMSPLSIWK.

8 helical membrane-spanning segments follow: residues 16–36, 88–108, 123–143, 157–177, 202–222, 264–284, 285–305, and 325–345; these read WPVV…MGCV, GLFI…WAVV, LLFL…AGWA, AAQM…VLLI, FLSW…ISGI, ILVS…PVGF, LPDG…IFLW, and VFIP…MSPL.

The protein belongs to the complex I subunit 1 family. As to quaternary structure, NDH-1 is composed of 14 different subunits. Subunits NuoA, H, J, K, L, M, N constitute the membrane sector of the complex.

It is found in the cell inner membrane. The catalysed reaction is a quinone + NADH + 5 H(+)(in) = a quinol + NAD(+) + 4 H(+)(out). In terms of biological role, NDH-1 shuttles electrons from NADH, via FMN and iron-sulfur (Fe-S) centers, to quinones in the respiratory chain. The immediate electron acceptor for the enzyme in this species is believed to be ubiquinone. Couples the redox reaction to proton translocation (for every two electrons transferred, four hydrogen ions are translocated across the cytoplasmic membrane), and thus conserves the redox energy in a proton gradient. This subunit may bind ubiquinone. The sequence is that of NADH-quinone oxidoreductase subunit H from Azoarcus sp. (strain BH72).